A 177-amino-acid polypeptide reads, in one-letter code: Co-chaperone protein HscB homolog (177 aa).

Positions Asp-8–Leu-80 constitute a J domain.

It belongs to the HscB family. As to quaternary structure, interacts with HscA and stimulates its ATPase activity.

Its function is as follows. Co-chaperone involved in the maturation of iron-sulfur cluster-containing proteins. Seems to help targeting proteins to be folded toward HscA. The protein is Co-chaperone protein HscB homolog of Azoarcus sp. (strain BH72).